The following is a 354-amino-acid chain: GTPase Obg (354 aa).

Residues 1 to 159 (MKFLDQCKIY…LWVWLRLKLI (159 aa)) enclose the Obg domain. Positions 160–328 (ADVGLVGLPN…LLRAAFTQVR (169 aa)) constitute an OBG-type G domain. Residues 166 to 173 (GLPNAGKS), 191 to 195 (FTTLT), 213 to 216 (DIPG), 280 to 283 (NKVD), and 309 to 311 (SGV) each bind GTP. Mg(2+)-binding residues include Ser-173 and Thr-193. Residues 333 to 354 (ETPAEAAIDEAPEEETPGGWQP) are disordered. Residues 339 to 348 (AIDEAPEEET) show a composition bias toward acidic residues.

Belongs to the TRAFAC class OBG-HflX-like GTPase superfamily. OBG GTPase family. As to quaternary structure, monomer. Mg(2+) serves as cofactor.

The protein localises to the cytoplasm. Functionally, an essential GTPase which binds GTP, GDP and possibly (p)ppGpp with moderate affinity, with high nucleotide exchange rates and a fairly low GTP hydrolysis rate. Plays a role in control of the cell cycle, stress response, ribosome biogenesis and in those bacteria that undergo differentiation, in morphogenesis control. This Caulobacter sp. (strain K31) protein is GTPase Obg.